Here is a 224-residue protein sequence, read N- to C-terminus: Phosphoribosylformylglycinamidine synthase subunit PurQ (224 aa).

In terms of domain architecture, Glutamine amidotransferase type-1 spans 1–224; the sequence is MIAIIKFPGT…ILLRRLGEWA (224 aa). Cys84 acts as the Nucleophile in catalysis. Residues His196 and Glu198 contribute to the active site.

Part of the FGAM synthase complex composed of 1 PurL, 1 PurQ and 2 PurS subunits.

Its subcellular location is the cytoplasm. It catalyses the reaction N(2)-formyl-N(1)-(5-phospho-beta-D-ribosyl)glycinamide + L-glutamine + ATP + H2O = 2-formamido-N(1)-(5-O-phospho-beta-D-ribosyl)acetamidine + L-glutamate + ADP + phosphate + H(+). The catalysed reaction is L-glutamine + H2O = L-glutamate + NH4(+). It functions in the pathway purine metabolism; IMP biosynthesis via de novo pathway; 5-amino-1-(5-phospho-D-ribosyl)imidazole from N(2)-formyl-N(1)-(5-phospho-D-ribosyl)glycinamide: step 1/2. Its function is as follows. Part of the phosphoribosylformylglycinamidine synthase complex involved in the purines biosynthetic pathway. Catalyzes the ATP-dependent conversion of formylglycinamide ribonucleotide (FGAR) and glutamine to yield formylglycinamidine ribonucleotide (FGAM) and glutamate. The FGAM synthase complex is composed of three subunits. PurQ produces an ammonia molecule by converting glutamine to glutamate. PurL transfers the ammonia molecule to FGAR to form FGAM in an ATP-dependent manner. PurS interacts with PurQ and PurL and is thought to assist in the transfer of the ammonia molecule from PurQ to PurL. This is Phosphoribosylformylglycinamidine synthase subunit PurQ from Saccharolobus solfataricus (strain ATCC 35092 / DSM 1617 / JCM 11322 / P2) (Sulfolobus solfataricus).